Here is an 84-residue protein sequence, read N- to C-terminus: Beta-defensin 119 (84 aa).

The first 21 residues, 1–21 (MKLLYLFLAILLVIEEPVISG), serve as a signal peptide directing secretion. Disulfide bonds link cysteine 28–cysteine 55, cysteine 35–cysteine 49, and cysteine 39–cysteine 56.

It belongs to the beta-defensin family.

It is found in the secreted. Has antibacterial activity. The polypeptide is Beta-defensin 119 (DEFB119) (Pongo pygmaeus (Bornean orangutan)).